The chain runs to 101 residues: Small ribosomal subunit protein uS14 (101 aa).

This sequence belongs to the universal ribosomal protein uS14 family. As to quaternary structure, part of the 30S ribosomal subunit. Contacts proteins S3 and S10.

Functionally, binds 16S rRNA, required for the assembly of 30S particles and may also be responsible for determining the conformation of the 16S rRNA at the A site. This Methylorubrum populi (strain ATCC BAA-705 / NCIMB 13946 / BJ001) (Methylobacterium populi) protein is Small ribosomal subunit protein uS14.